A 675-amino-acid polypeptide reads, in one-letter code: DNA ligase (675 aa).

NAD(+) is bound by residues 32-36 (DAEYD), 81-82 (SL), and Glu113. Catalysis depends on Lys115, which acts as the N6-AMP-lysine intermediate. 4 residues coordinate NAD(+): Arg136, Glu173, Lys291, and Lys315. Zn(2+) is bound by residues Cys409, Cys412, Cys427, and Cys433. In terms of domain architecture, BRCT spans 595–675 (SEKTYFFNKK…ELNSLIRIKE (81 aa)).

It belongs to the NAD-dependent DNA ligase family. LigA subfamily. Mg(2+) is required as a cofactor. The cofactor is Mn(2+).

The enzyme catalyses NAD(+) + (deoxyribonucleotide)n-3'-hydroxyl + 5'-phospho-(deoxyribonucleotide)m = (deoxyribonucleotide)n+m + AMP + beta-nicotinamide D-nucleotide.. Its function is as follows. DNA ligase that catalyzes the formation of phosphodiester linkages between 5'-phosphoryl and 3'-hydroxyl groups in double-stranded DNA using NAD as a coenzyme and as the energy source for the reaction. It is essential for DNA replication and repair of damaged DNA. This chain is DNA ligase, found in Buchnera aphidicola subsp. Acyrthosiphon pisum (strain 5A).